Reading from the N-terminus, the 455-residue chain is Probable cytosolic iron-sulfur protein assembly protein 1 (455 aa).

WD repeat units lie at residues 31–70 (GHSS…TTSA), 90–129 (GHQR…DGSS), 163–202 (GHES…EFEC), 208–247 (EHSQ…DWFC), 253–292 (GHES…QCEA), 318–365 (YHDR…DEKS), and 380–453 (HASA…YAAT).

The protein belongs to the WD repeat CIA1 family.

Functionally, essential component of the cytosolic iron-sulfur (Fe/S) protein assembly machinery. Required for the maturation of extramitochondrial Fe/S proteins. The sequence is that of Probable cytosolic iron-sulfur protein assembly protein 1 from Mycosarcoma maydis (Corn smut fungus).